A 357-amino-acid chain; its full sequence is Transcription factor unc-86 (357 aa).

Positions 35–44 (RAAQVALADI) match the POU-IV box motif. The 78-residue stretch at 155 to 232 (DMDTDPRQLE…ILHSWLEKAE (78 aa)) folds into the POU-specific domain. A DNA-binding region (homeobox) is located at residues 253 to 312 (KKRKRTSIAAPEKRELEQFFKQQPRPSGERIASIADRLDLKKNVVRVWFCNQRQKQKRDF).

It belongs to the POU transcription factor family. Class-4 subfamily. In terms of assembly, interacts with mec-3; the heterooligomer binds to the promoters of mec-3, mec-4 and mec-7. As to expression, specific to neurons and neuroblasts. Expressed in CEM head neurons and in IL2, URA, URB, URX and URY neurons. Not expressed in olfactory sensory neurons but expressed in AIZ interneurons.

Its subcellular location is the nucleus. Its function is as follows. Transcription factor required for correct cell fate determination and differentiation in diverse neuronal cell lineages where it plays a role in specifying the fate of daughter cells during cell divisions. Involved in sensory neuron production and function. Binds both alone and with mec-3 to the mec-3 promoter to initiate and maintain mec-3 expression which is required for sensory neuron differentiation. In addition, binds both alone and with mec-3 to the promoters of mec-4 and mec-7 which act to regulate sensory neuron function. Involved in determining the identity of the serotonergic NSM neurons and the cholinergic IL2 sensory and URA motor neurons. Promotes expression of the cfi-1 transcription factor in the URA and IL2 neurons which in turn activates normal URA and IL2 gene expression. Required to determine the identity of BDU sensory neurons in concert with transcription factor unc-86, regulating expression of a number of genes, including transcription factors ceh-14 and ahr-1, neuropeptides flp-10, nlp-1 and nlp-15, and tyramine receptor-encoding ser-2. Regulates expression of a number of genes in NSM neurons including bas-1, cat-1, dop-3, mgl-3, nlp-13, scd-2 and ptps-1. In the IL2 neurons, required for expression of cho-1, gcy-19, klp-6, lag-2, unc-5 and unc-17. Promotes expression of pkd-2 in the male-specific CEM head neurons. Required for dauer-specific branching of IL2Q neurons and nictation behavior. Controls both the timing and direction of axon outgrowth in HSN neurons. Plays a role in serotonin production by regulating expression of the tryptophan hydrolase tph-1 which catalyzes serotonin synthesis, in the AIM, NSM, HSN and RIH neurons. Involved in regulation of lin-11 expression in the AIZ interneurons, the major interneurons of the olfactory pathway, and is required for odortaxis behavior. Involved in neurite pruning between AIM neurons during larval development by regulating the expression of transcription factor mbr-1. Required for correct localization of unc-40. The sequence is that of Transcription factor unc-86 (unc-86) from Caenorhabditis elegans.